Here is a 150-residue protein sequence, read N- to C-terminus: 3-dehydroquinate dehydratase (150 aa).

The Proton acceptor role is filled by tyrosine 26. Asparagine 77, histidine 83, and aspartate 90 together coordinate substrate. The active-site Proton donor is the histidine 103. Substrate is bound by residues 104 to 105 and arginine 114; that span reads LS.

The protein belongs to the type-II 3-dehydroquinase family. In terms of assembly, homododecamer.

It carries out the reaction 3-dehydroquinate = 3-dehydroshikimate + H2O. It participates in metabolic intermediate biosynthesis; chorismate biosynthesis; chorismate from D-erythrose 4-phosphate and phosphoenolpyruvate: step 3/7. Catalyzes a trans-dehydration via an enolate intermediate. This chain is 3-dehydroquinate dehydratase, found in Klebsiella pneumoniae (strain 342).